Here is a 464-residue protein sequence, read N- to C-terminus: Protein btn-1 (464 aa).

A signal peptide spans Met-1 to Ala-22. A run of 10 helical transmembrane segments spans residues Ala-38 to Leu-58, Val-73 to Ile-93, Ile-102 to Ser-122, Leu-129 to Leu-149, Gly-167 to Val-187, Ser-190 to Pro-210, Ser-288 to Asn-308, Pro-332 to Ile-352, Ile-354 to His-374, and Leu-376 to Leu-396.

It belongs to the battenin family.

It localises to the vacuole membrane. Functionally, involved in vacuolar transport and vacuole pH homeostasis. Also required for cytokinesis. The chain is Protein btn-1 (cln3) from Neurospora crassa (strain ATCC 24698 / 74-OR23-1A / CBS 708.71 / DSM 1257 / FGSC 987).